Consider the following 775-residue polypeptide: Venom dipeptidyl peptidase 4 (775 aa).

A signal peptide spans 1-23; sequence MEVLVQLALLLVVHGSLVVLVAG. N-linked (GlcNAc...) asparagine glycosylation is found at asparagine 68 and asparagine 239. Cystine bridges form between cysteine 450–cysteine 453 and cysteine 463–cysteine 481. Residues asparagine 473, asparagine 505, asparagine 578, and asparagine 631 are each glycosylated (N-linked (GlcNAc...) asparagine). Residue serine 639 is the Charge relay system of the active site. The cysteines at positions 659 and 770 are disulfide-linked. Asparagine 689 and asparagine 694 each carry an N-linked (GlcNAc...) asparagine glycan. Catalysis depends on charge relay system residues aspartate 718 and histidine 750.

It belongs to the peptidase S9B family. DPPIV subfamily. As to expression, expressed by the venom duct.

The protein resides in the secreted. The enzyme catalyses Release of an N-terminal dipeptide, Xaa-Yaa-|-Zaa-, from a polypeptide, preferentially when Yaa is Pro, provided Zaa is neither Pro nor hydroxyproline.. With respect to regulation, inhibited by diprotin A. Functionally, venom dipeptidyl-peptidase which removes N-terminal dipeptides sequentially from polypeptides having unsubstituted N-termini provided that the penultimate residue is proline. May process promelittin into its active form and/or modulate the chemotactic activity of immune cells after the insect sting. The sequence is that of Venom dipeptidyl peptidase 4 from Apis mellifera (Honeybee).